Here is a 276-residue protein sequence, read N- to C-terminus: Large ribosomal subunit protein uL2 (276 aa).

Disordered regions lie at residues 33–55 (LVEA…RHIG) and 221–276 (RGTA…AKKK).

Belongs to the universal ribosomal protein uL2 family. In terms of assembly, part of the 50S ribosomal subunit. Forms a bridge to the 30S subunit in the 70S ribosome.

One of the primary rRNA binding proteins. Required for association of the 30S and 50S subunits to form the 70S ribosome, for tRNA binding and peptide bond formation. It has been suggested to have peptidyltransferase activity; this is somewhat controversial. Makes several contacts with the 16S rRNA in the 70S ribosome. This Psychrobacter sp. (strain PRwf-1) protein is Large ribosomal subunit protein uL2.